Consider the following 437-residue polypeptide: MTSWQRLCWHYRLWTLGCYMLLAILALKLSLRLKCDFDAMDLDSEEFQSQYCRDLLYKTLKLPAKSSINCSGVIRGEQKAVTQALLNNLEIKKKQQLFTEADYLRMTADCEHFKTKRKFIQVPLSKEEASFPIAYSMVVHEKIENFERLLRAVYTPQNVYCVHMDQKSSEPFKQAVRAIVSCFPNVFIASKLVSVVYASWSRVQADLNCMEDLLQSPVPWKYLLNTCGTDFPIKTNAEMVKALKLLKGQNSMESEVPPPHKKSRWKYHYEVTDTLHMTSKRKTPPPNNLTMFTGNAYMVASRDFIEHVFSNSKARQLIEWVKDTYSPDEHLWATLQRASWMPGSDPLHRKFDLSDMRAIARLTKWYDHEGDIENGAPYTSCSGIHQRAVCVYGSGDLHWILQNHHLLANKFDPKVDDNVLQCLEEYLRHKAIYGTEL.

The Cytoplasmic portion of the chain corresponds to 1–12 (MTSWQRLCWHYR). Residues 13-30 (LWTLGCYMLLAILALKLS) traverse the membrane as a helical; Signal-anchor for type II membrane protein segment. Residues 31 to 437 (LRLKCDFDAM…RHKAIYGTEL (407 aa)) are Lumenal-facing. 4 disulfides stabilise this stretch: C70–C227, C161–C381, C182–C209, and C390–C422. N288 carries N-linked (GlcNAc...) asparagine glycosylation.

Belongs to the glycosyltransferase 14 family. Post-translationally, N-glycosylated.

The protein resides in the golgi apparatus membrane. It carries out the reaction a 3-O-[beta-D-galactosyl-(1-&gt;3)-N-acetyl-alpha-D-galactosaminyl]-L-seryl-[protein] + UDP-N-acetyl-alpha-D-glucosamine = 3-O-{beta-D-galactosyl-(1-&gt;3)-[N-acetyl-beta-D-glucosaminyl-(1-&gt;6)]-N-acetyl-alpha-D-galactosaminyl}-L-seryl-[protein] + UDP + H(+). It catalyses the reaction a 3-O-[beta-D-galactosyl-(1-&gt;3)-N-acetyl-alpha-D-galactosaminyl]-L-threonyl-[protein] + UDP-N-acetyl-alpha-D-glucosamine = a 3-O-{beta-D-galactosyl-(1-&gt;3)-[N-acetyl-beta-D-glucosaminyl-(1-&gt;6)]-N-acetyl-alpha-D-galactosaminyl}-L-threonyl-[protein] + UDP + H(+). The enzyme catalyses a beta-D-Gal-(1-&gt;4)-beta-D-GlcNAc-(1-&gt;3)-beta-D-Gal-(1-&gt;4)-beta-D-GlcNAc derivative + UDP-N-acetyl-alpha-D-glucosamine = a beta-D-Gal-(1-&gt;4)-beta-D-GlcNAc-(1-&gt;3)-[beta-D-GlcNAc-(1-&gt;6)]-beta-D-Gal-(1-&gt;4)-N-acetyl-beta-D-glucosaminyl derivative + UDP + H(+). The catalysed reaction is 3-O-[N-acetyl-beta-D-glucosaminyl-(1-&gt;3)-N-acetyl-alpha-D-galactosaminyl]-L-seryl-[protein] + UDP-N-acetyl-alpha-D-glucosamine = 3-O-[N-acetyl-beta-D-glucosaminyl-(1-&gt;3)-[N-acetyl-beta-D-glucosaminyl-(1-&gt;6)]-N-acetyl-alpha-D-galactosaminyl]-L-seryl-[protein] + UDP + H(+). It carries out the reaction a 3-O-[N-acetyl-beta-D-glucosaminyl-(1-&gt;3)-N-acetyl-alpha-D-galactosaminyl]-L-threonyl-[protein] + UDP-N-acetyl-alpha-D-glucosamine = 3-O-[N-acetyl-beta-D-glucosaminyl-(1-&gt;3)-[N-acetyl-beta-D-glucosaminyl-(1-&gt;6)]-N-acetyl-alpha-D-galactosaminyl]-L-threonyl-[protein] + UDP + H(+). It functions in the pathway protein modification; protein glycosylation. Glycosyltransferase that can synthesize all known mucin beta 6 N-acetylglucosaminides. Mediates core 2 and core 4 O-glycan branching, 2 important steps in mucin-type biosynthesis. Also has I-branching enzyme activity by converting linear into branched poly-N-acetyllactosaminoglycans, leading to introduce the blood group I antigen during embryonic development. This is Beta-1,3-galactosyl-O-glycosyl-glycoprotein beta-1,6-N-acetylglucosaminyltransferase 3 (Gcnt3) from Mus musculus (Mouse).